The primary structure comprises 473 residues: Cholesterol 22-monohydroxylase CYP90B52 (473 aa).

The helical transmembrane segment at 2-22 (EGLLLLLPTAIIALYLYISLI) threads the bilayer. Residue Cys422 participates in heme binding.

The protein belongs to the cytochrome P450 family. As to expression, mainly expressed in leaves and roots and, at low levels, in fruits and stems.

It is found in the membrane. The enzyme catalyses cholesterol + reduced [NADPH--hemoprotein reductase] + O2 = (22S)-22-hydroxycholesterol + oxidized [NADPH--hemoprotein reductase] + H2O + H(+). It participates in steroid metabolism; cholesterol metabolism. In terms of biological role, canonical brassinosteroid (BR)-biosynthetic enzyme capable of converting cholesterol to 22S-hydroxycholesterol via sterol-C22 hydroxylation. The sequence is that of Cholesterol 22-monohydroxylase CYP90B52 from Paris polyphylla (Daiswa polyphylla).